A 403-amino-acid polypeptide reads, in one-letter code: Tyrosine--tRNA ligase (403 aa).

The 'HIGH' region signature appears at 42 to 51; that stretch reads PTAPDLHLGH. The 'KMSKS' region motif lies at 226–230; sequence KMSKS. Residue lysine 229 participates in ATP binding. The S4 RNA-binding domain maps to 339-400; it reads LRIASLLTAA…GKRNFARVAL (62 aa).

Belongs to the class-I aminoacyl-tRNA synthetase family. TyrS type 2 subfamily. As to quaternary structure, homodimer.

It is found in the cytoplasm. The catalysed reaction is tRNA(Tyr) + L-tyrosine + ATP = L-tyrosyl-tRNA(Tyr) + AMP + diphosphate + H(+). Catalyzes the attachment of tyrosine to tRNA(Tyr) in a two-step reaction: tyrosine is first activated by ATP to form Tyr-AMP and then transferred to the acceptor end of tRNA(Tyr). In Xanthomonas campestris pv. campestris (strain ATCC 33913 / DSM 3586 / NCPPB 528 / LMG 568 / P 25), this protein is Tyrosine--tRNA ligase.